The sequence spans 156 residues: Arginine repressor (156 aa).

The protein belongs to the ArgR family.

The protein resides in the cytoplasm. The protein operates within amino-acid biosynthesis; L-arginine biosynthesis [regulation]. In terms of biological role, regulates arginine biosynthesis genes. The chain is Arginine repressor from Vibrio atlanticus (strain LGP32) (Vibrio splendidus (strain Mel32)).